A 510-amino-acid chain; its full sequence is Beta-glucosidase 34 (510 aa).

The N-terminal stretch at 1–26 is a signal peptide; sequence MGNGGRCMVEVVILLVLMAMSQGCDA. Asn-28 is a glycosylation site (N-linked (GlcNAc...) asparagine). Gln-52 is a binding site for a beta-D-glucoside. An N-linked (GlcNAc...) asparagine glycan is attached at Asn-120. Residues His-153 and 198–199 contribute to the a beta-D-glucoside site; that span reads NE. Residue Glu-199 is the Proton donor of the active site. A disulfide bond links Cys-218 and Cys-226. N-linked (GlcNAc...) asparagine glycosylation is found at Asn-279 and Asn-331. Residue Tyr-342 coordinates a beta-D-glucoside. N-linked (GlcNAc...) asparagine glycosylation occurs at Asn-360. Residues Glu-415, Trp-465, 472-473, and Phe-481 contribute to the a beta-D-glucoside site; that span reads EW. Glu-415 serves as the catalytic Nucleophile.

This sequence belongs to the glycosyl hydrolase 1 family.

The catalysed reaction is Hydrolysis of terminal, non-reducing beta-D-glucosyl residues with release of beta-D-glucose.. The sequence is that of Beta-glucosidase 34 (BGLU34) from Oryza sativa subsp. japonica (Rice).